Here is a 309-residue protein sequence, read N- to C-terminus: Porphobilinogen deaminase (309 aa).

At Cys-242 the chain carries S-(dipyrrolylmethanemethyl)cysteine.

It belongs to the HMBS family. In terms of assembly, monomer. The cofactor is dipyrromethane.

It catalyses the reaction 4 porphobilinogen + H2O = hydroxymethylbilane + 4 NH4(+). The protein operates within porphyrin-containing compound metabolism; protoporphyrin-IX biosynthesis; coproporphyrinogen-III from 5-aminolevulinate: step 2/4. Tetrapolymerization of the monopyrrole PBG into the hydroxymethylbilane pre-uroporphyrinogen in several discrete steps. This is Porphobilinogen deaminase from Hamiltonella defensa subsp. Acyrthosiphon pisum (strain 5AT).